A 555-amino-acid polypeptide reads, in one-letter code: Energy-dependent translational throttle protein EttA (555 aa).

2 ABC transporter domains span residues 6–259 and 324–550; these read YTMH…AQEA and LEVS…RIKY. ATP is bound at residue 39 to 46; sequence GLNGAGKS. Positions 95 to 139 are arm; it reads SEVVNALKRLDEVYALYADPDADFDKLAAEQGRLEEIIQAHDGHN. The interval 242-322 is ptIM; sequence GNYSSWLEQK…IPPGPRLGDK (81 aa). Residue 356 to 363 participates in ATP binding; that stretch reads GPNGAGKS.

It belongs to the ABC transporter superfamily. ABCF family. Translational throttle EttA subfamily. In terms of assembly, monomer. Probably contacts ribosomal proteins L1, L5, L33 and S7, the 16S and 23S rRNA and the P-site containing tRNA(fMet).

It localises to the cytoplasm. It carries out the reaction ATP + H2O = ADP + phosphate + H(+). Its function is as follows. A translation factor that gates the progression of the 70S ribosomal initiation complex (IC, containing tRNA(fMet) in the P-site) into the translation elongation cycle by using a mechanism sensitive to the ATP/ADP ratio. Binds to the 70S ribosome E-site where it modulates the state of the translating ribosome during subunit translocation. ATP hydrolysis probably frees it from the ribosome, which can enter the elongation phase. This Escherichia coli O157:H7 protein is Energy-dependent translational throttle protein EttA.